The following is a 205-amino-acid chain: Protein N-terminal glutamine amidohydrolase (205 aa).

Catalysis depends on residues cysteine 20, histidine 74, and aspartate 90.

It belongs to the NTAQ1 family. In terms of assembly, monomer.

The enzyme catalyses N-terminal L-glutaminyl-[protein] + H2O = N-terminal L-glutamyl-[protein] + NH4(+). Its function is as follows. Mediates the side-chain deamidation of N-terminal glutamine residues to glutamate, an important step in N-end rule pathway of protein degradation. Conversion of the resulting N-terminal glutamine to glutamate renders the protein susceptible to arginylation, polyubiquitination and degradation as specified by the N-end rule. Does not act on substrates with internal or C-terminal glutamine and does not act on non-glutamine residues in any position. The protein is Protein N-terminal glutamine amidohydrolase (tun) of Drosophila mojavensis (Fruit fly).